An 859-amino-acid chain; its full sequence is Protein EFR3 homolog (859 aa).

Disordered regions lie at residues 638–657 and 697–724; these read DDPL…TPRT and RDGN…PDGY. A compositionally biased stretch (basic and acidic residues) spans 704–722; the sequence is WQREDGQNFDSTDGRESPD.

The protein belongs to the EFR3 family.

This is Protein EFR3 homolog from Caenorhabditis briggsae.